We begin with the raw amino-acid sequence, 177 residues long: Large ribosomal subunit protein uL5m (177 aa).

Belongs to the universal ribosomal protein uL5 family.

The protein resides in the mitochondrion. The protein is Large ribosomal subunit protein uL5m (RPL5) of Acanthamoeba castellanii (Amoeba).